The following is a 144-amino-acid chain: Transcription antitermination protein NusB (144 aa).

The protein belongs to the NusB family.

Involved in transcription antitermination. Required for transcription of ribosomal RNA (rRNA) genes. Binds specifically to the boxA antiterminator sequence of the ribosomal RNA (rrn) operons. The protein is Transcription antitermination protein NusB of Buchnera aphidicola subsp. Baizongia pistaciae (strain Bp).